The primary structure comprises 414 residues: Dual-specificity RNA methyltransferase RlmN (414 aa).

The active-site Proton acceptor is Glu127. The 248-residue stretch at 133 to 380 folds into the Radical SAM core domain; the sequence is GEGRGTLCVS…SPIRMPRGRD (248 aa). Cys140 and Cys385 are joined by a disulfide. Residues Cys147, Cys151, and Cys154 each coordinate [4Fe-4S] cluster. S-adenosyl-L-methionine-binding positions include 211–212, Ser243, 265–267, and Asn342; these read GE and SLH. Cys385 functions as the S-methylcysteine intermediate in the catalytic mechanism.

It belongs to the radical SAM superfamily. RlmN family. It depends on [4Fe-4S] cluster as a cofactor.

The protein localises to the cytoplasm. It carries out the reaction adenosine(2503) in 23S rRNA + 2 reduced [2Fe-2S]-[ferredoxin] + 2 S-adenosyl-L-methionine = 2-methyladenosine(2503) in 23S rRNA + 5'-deoxyadenosine + L-methionine + 2 oxidized [2Fe-2S]-[ferredoxin] + S-adenosyl-L-homocysteine. It catalyses the reaction adenosine(37) in tRNA + 2 reduced [2Fe-2S]-[ferredoxin] + 2 S-adenosyl-L-methionine = 2-methyladenosine(37) in tRNA + 5'-deoxyadenosine + L-methionine + 2 oxidized [2Fe-2S]-[ferredoxin] + S-adenosyl-L-homocysteine. Functionally, specifically methylates position 2 of adenine 2503 in 23S rRNA and position 2 of adenine 37 in tRNAs. m2A2503 modification seems to play a crucial role in the proofreading step occurring at the peptidyl transferase center and thus would serve to optimize ribosomal fidelity. The polypeptide is Dual-specificity RNA methyltransferase RlmN (Bartonella bacilliformis (strain ATCC 35685 / KC583 / Herrer 020/F12,63)).